Here is a 242-residue protein sequence, read N- to C-terminus: 3-deoxy-manno-octulosonate cytidylyltransferase (242 aa).

This sequence belongs to the KdsB family.

It is found in the cytoplasm. The catalysed reaction is 3-deoxy-alpha-D-manno-oct-2-ulosonate + CTP = CMP-3-deoxy-beta-D-manno-octulosonate + diphosphate. The protein operates within nucleotide-sugar biosynthesis; CMP-3-deoxy-D-manno-octulosonate biosynthesis; CMP-3-deoxy-D-manno-octulosonate from 3-deoxy-D-manno-octulosonate and CTP: step 1/1. It functions in the pathway bacterial outer membrane biogenesis; lipopolysaccharide biosynthesis. Activates KDO (a required 8-carbon sugar) for incorporation into bacterial lipopolysaccharide in Gram-negative bacteria. This chain is 3-deoxy-manno-octulosonate cytidylyltransferase, found in Anaeromyxobacter dehalogenans (strain 2CP-1 / ATCC BAA-258).